The primary structure comprises 78 residues: Omega-conotoxin-like 2 (78 aa).

Residues 1 to 22 form the signal peptide; it reads MKLTCVVIVAVLLLTACQLITA. The propeptide occupies 23–42; the sequence is DDSRGTQKHRSLRSTTKVSK. Cystine bridges form between Cys46-Cys62, Cys53-Cys65, and Cys61-Cys72.

It belongs to the conotoxin O1 superfamily. In terms of tissue distribution, expressed by the venom duct.

The protein localises to the secreted. Omega-conotoxins act at presynaptic membranes, they bind and block voltage-gated calcium channels (Cav). The protein is Omega-conotoxin-like 2 of Conus striatus (Striated cone).